Reading from the N-terminus, the 232-residue chain is Large ribosomal subunit protein uL1 (232 aa).

This sequence belongs to the universal ribosomal protein uL1 family. In terms of assembly, part of the 50S ribosomal subunit.

Binds directly to 23S rRNA. The L1 stalk is quite mobile in the ribosome, and is involved in E site tRNA release. In terms of biological role, protein L1 is also a translational repressor protein, it controls the translation of the L11 operon by binding to its mRNA. The sequence is that of Large ribosomal subunit protein uL1 from Francisella tularensis subsp. holarctica (strain LVS).